A 522-amino-acid chain; its full sequence is MLRTSCGGMLLLVHALGLVRAQFPRACVTPEGLRSAQCCPSPSALESDPCGALAGPGRCVDVRMRAHGPQYPYEGATTRALARASSRACRCNGNFGGFDCGGCAHGFTGDACEQRVPVVRRNVMQLSADEKRFFVNALDQAKRAPHPDTVIATRRYSEILGPDNSTTQFENISIYNLFVWTHYYSVSKTFLGAGQDSFGGVDFSHEGPGFLTWHRYHLLQLERDMQVMLGDPSFALPYWDFAIGGSECDICTDELMGARSSSDSSSISSNSIFSRWRVICESVEEYDTLGTICNSSESSPIRRNPAGNTARPMVQRLPEPQDVEACLELTAFDSPPFYSTSSDSFRNSIEGYSAPQGNYDPVVRSLHNLAHLFLNGTGGQTHLSPNDPIFVLLHTFTDAVFDEWLRRHASDASIYPLENTPIGHNREFNMVPFWPPVTNAEMFVTAAENLGYSYEAEWPARPLTPTQIVTVAVVAALLLVAIIFAASTCVVHLRGNRTEGRQPLLGDQYQRYEDHNKTQSVV.

The first 21 residues, 1 to 21 (MLRTSCGGMLLLVHALGLVRA), serve as a signal peptide directing secretion. Residues 22–470 (QFPRACVTPE…RPLTPTQIVT (449 aa)) are Lumenal, melanosome-facing. 5 disulfides stabilise this stretch: Cys27–Cys38, Cys39–Cys59, Cys50–Cys89, Cys91–Cys100, and Cys103–Cys112. 2 N-linked (GlcNAc...) asparagine glycosylation sites follow: Asn164 and Asn171. His182, His205, and His214 together coordinate Zn(2+). 2 disulfides stabilise this stretch: Cys248/Cys251 and Cys280/Cys293. Asn294 carries N-linked (GlcNAc...) asparagine glycosylation. His367 and His371 together coordinate Zn(2+). The N-linked (GlcNAc...) asparagine glycan is linked to Asn375. Residue His394 coordinates Zn(2+). The chain crosses the membrane as a helical span at residues 471-491 (VAVVAALLLVAIIFAASTCVV). Residues 492–522 (HLRGNRTEGRQPLLGDQYQRYEDHNKTQSVV) are Cytoplasmic-facing.

It belongs to the tyrosinase family. Requires Cu(2+) as cofactor. Zn(2+) is required as a cofactor.

It is found in the melanosome membrane. It carries out the reaction 2 5,6-dihydroxyindole-2-carboxylate + O2 = 2 indole-5,6-quinone-2-carboxylate + 2 H2O. The protein operates within pigment biosynthesis; melanin biosynthesis. In terms of biological role, plays a role in melanin biosynthesis. Catalyzes the oxidation of 5,6-dihydroxyindole-2-carboxylic acid (DHICA) into indole-5,6-quinone-2-carboxylic acid. May regulate or influence the type of melanin synthesized. Also to a lower extent, capable of hydroxylating tyrosine and producing melanin. The chain is 5,6-dihydroxyindole-2-carboxylic acid oxidase (tyrp1) from Carassius auratus (Goldfish).